A 164-amino-acid chain; its full sequence is Peptidyl-prolyl cis-trans isomerase A-like 4H (164 aa).

The region spanning 7 to 163 is the PPIase cyclophilin-type domain; the sequence is FFDITVDGKP…KKITIADCGQ (157 aa). Residues Asn-71 and Asn-108 are each glycosylated (N-linked (GlcNAc...) asparagine).

The protein belongs to the cyclophilin-type PPIase family. PPIase A subfamily.

It localises to the cytoplasm. The enzyme catalyses [protein]-peptidylproline (omega=180) = [protein]-peptidylproline (omega=0). Functionally, PPIases accelerate the folding of proteins. It catalyzes the cis-trans isomerization of proline imidic peptide bonds in oligopeptides. The chain is Peptidyl-prolyl cis-trans isomerase A-like 4H from Homo sapiens (Human).